Here is a 176-residue protein sequence, read N- to C-terminus: Cytochrome b561 homolog 1 (176 aa).

Topologically, residues 1-7 are cytoplasmic; the sequence is MNRFSKT. The chain crosses the membrane as a helical span at residues 8–28; sequence QIYLHWITLLFVAITYAAMEL. Residue His12 coordinates heme b. Over 29-45 the chain is Periplasmic; it reads RGWFPKGSSTYLLMRET. Residue His46 participates in heme b binding. Residues 46–63 form a helical membrane-spanning segment; it reads HYNAGIFVWVLMFSRLII. Residues 64–85 are Cytoplasmic-facing; it reads KHRYSDPSIVPPPPAWQMKAAS. The helical transmembrane segment at 86–106 threads the bilayer; it reads LMHIMLYITFLALPLLGIALM. Residues 107–141 are Periplasmic-facing; it reads AYSGKSWSFLGFNVSPFVTPNSEIKALIKNIHETW. Heme b is bound by residues His138 and His152. The chain crosses the membrane as a helical span at residues 142 to 162; it reads ANIGYFLIAAHAGAALFHHYI. Topologically, residues 163-176 are cytoplasmic; sequence QKDNTLLRMMPRRK.

This sequence belongs to the cytochrome b561 family. Heme b serves as cofactor.

The protein localises to the cell inner membrane. This chain is Cytochrome b561 homolog 1 (yodB), found in Escherichia coli (strain K12).